The following is a 59-amino-acid chain: Large ribosomal subunit protein bL32c (59 aa).

The protein belongs to the bacterial ribosomal protein bL32 family.

It is found in the plastid. Its subcellular location is the chloroplast. The protein is Large ribosomal subunit protein bL32c of Physcomitrium patens (Spreading-leaved earth moss).